The sequence spans 125 residues: Ribonuclease VapC19 (125 aa).

The region spanning 3–122 (LIDTTIAVDH…RHFPMFPDLQ (120 aa)) is the PINc domain. Mg(2+) is bound by residues aspartate 5 and aspartate 93.

This sequence belongs to the PINc/VapC protein family. Mg(2+) serves as cofactor.

Toxic component of a type II toxin-antitoxin (TA) system. An RNase. Its toxic effect is neutralized by coexpression with cognate antitoxin VapB19. The polypeptide is Ribonuclease VapC19 (Mycobacterium tuberculosis (strain CDC 1551 / Oshkosh)).